Reading from the N-terminus, the 152-residue chain is Succinate dehydrogenase [ubiquinone] cytochrome b small subunit A, mitochondrial (152 aa).

A mitochondrion-targeting transit peptide spans 1-21 (MVTVLRLSSLCRANRASAFKS). Topologically, residues 22 to 56 (LLIRPVPCLSQDLHTVQTSQIHTSQNHHAASKAAS) are mitochondrial matrix. Residues 57 to 78 (LHWTSERALSVALLGLLPAAYL) traverse the membrane as a helical segment. Residues 79-83 (YPGAA) lie on the Mitochondrial intermembrane side of the membrane. Residues 84 to 104 (VDYSLAAALTLHGHWGLGQVV) traverse the membrane as a helical segment. H95 serves as a coordination point for heme b. The Mitochondrial matrix segment spans residues 105-113 (TDYVHGDAK). A ubiquinone is bound at residue Y107. A helical membrane pass occupies residues 114–135 (IKLANTSLFALSALTFAGLCYF). The Mitochondrial intermembrane portion of the chain corresponds to 136–152 (NYHDVGICKAVAMLWSL).

This sequence belongs to the CybS family. Component of complex II composed of four subunits: the flavoprotein (FP) SDHA, iron-sulfur protein (IP) SDHB, and a cytochrome b560 composed of SDHC and SDHD.

It is found in the mitochondrion inner membrane. The protein operates within carbohydrate metabolism; tricarboxylic acid cycle. Functionally, membrane-anchoring subunit of succinate dehydrogenase (SDH) that is involved in complex II of the mitochondrial electron transport chain and is responsible for transferring electrons from succinate to ubiquinone (coenzyme Q). SDH also oxidizes malate to the non-canonical enol form of oxaloacetate, enol-oxaloacetate. Enol-oxaloacetate, which is a potent inhibitor of the succinate dehydrogenase activity, is further isomerized into keto-oxaloacetate. The polypeptide is Succinate dehydrogenase [ubiquinone] cytochrome b small subunit A, mitochondrial (sdhd-a) (Xenopus laevis (African clawed frog)).